The following is a 421-amino-acid chain: 4-hydroxy-3-methylbut-2-en-1-yl diphosphate synthase (flavodoxin) (421 aa).

Residues C300, C303, C346, and E353 each contribute to the [4Fe-4S] cluster site.

This sequence belongs to the IspG family. The cofactor is [4Fe-4S] cluster.

The enzyme catalyses (2E)-4-hydroxy-3-methylbut-2-enyl diphosphate + oxidized [flavodoxin] + H2O + 2 H(+) = 2-C-methyl-D-erythritol 2,4-cyclic diphosphate + reduced [flavodoxin]. It participates in isoprenoid biosynthesis; isopentenyl diphosphate biosynthesis via DXP pathway; isopentenyl diphosphate from 1-deoxy-D-xylulose 5-phosphate: step 5/6. Functionally, converts 2C-methyl-D-erythritol 2,4-cyclodiphosphate (ME-2,4cPP) into 1-hydroxy-2-methyl-2-(E)-butenyl 4-diphosphate. The polypeptide is 4-hydroxy-3-methylbut-2-en-1-yl diphosphate synthase (flavodoxin) (Laribacter hongkongensis (strain HLHK9)).